Reading from the N-terminus, the 200-residue chain is Molybdenum cofactor guanylyltransferase (200 aa).

GTP contacts are provided by residues 15-17 (LAG), Lys28, Asp74, and Asp104. Asp104 serves as a coordination point for Mg(2+).

Belongs to the MobA family. As to quaternary structure, monomer. Mg(2+) is required as a cofactor.

It localises to the cytoplasm. The enzyme catalyses Mo-molybdopterin + GTP + H(+) = Mo-molybdopterin guanine dinucleotide + diphosphate. Its function is as follows. Transfers a GMP moiety from GTP to Mo-molybdopterin (Mo-MPT) cofactor (Moco or molybdenum cofactor) to form Mo-molybdopterin guanine dinucleotide (Mo-MGD) cofactor. This Pseudomonas fluorescens (strain Pf0-1) protein is Molybdenum cofactor guanylyltransferase.